Reading from the N-terminus, the 206-residue chain is uncharacterized protein (206 aa).

Disordered regions lie at residues 38–88 (RLQQ…NKNA) and 160–206 (HQNT…SVQE). Residues 40 to 73 (QQQQQQQQQQQQNRTASSLQQPQQQQPISPPLFL) show a composition bias toward low complexity. Ser68 is modified (phosphoserine). Positions 78 to 88 (TSENSNLNKNA) are enriched in polar residues. Residues 165-186 (SSSNPGSMSSSPPNSASSIFNS) show a composition bias toward low complexity. Residues 192–206 (PYTSQSFNPLESVQE) are compositionally biased toward polar residues.

It localises to the cytoplasm. This is an uncharacterized protein from Saccharomyces cerevisiae (strain ATCC 204508 / S288c) (Baker's yeast).